The following is a 191-amino-acid chain: Oleosin 20.3 kDa (191 aa).

The residue at position 2 (alanine 2) is an N-acetylalanine. Positions 2-54 are polar; sequence ANVDRDRRVHVDRTDKRVHQPNYEDDVGFGGYGGYGAGSDYKSRGPSTNQILA. 2 helical membrane passes run 52–72 and 99–119; these read ILAL…AGLT and LTIG…LTGL. A hydrophobic region spans residues 55-128; the sequence is LIAGVPIGGT…LSSVSWVLNY (74 aa).

The protein belongs to the oleosin family.

The protein localises to the lipid droplet. Its subcellular location is the membrane. Functionally, may have a structural role to stabilize the lipid body during desiccation of the seed by preventing coalescence of the oil. Probably interacts with both lipid and phospholipid moieties of lipid bodies. May also provide recognition signals for specific lipase anchorage in lipolysis during seedling growth. In Arabidopsis thaliana (Mouse-ear cress), this protein is Oleosin 20.3 kDa (OL2).